The primary structure comprises 112 residues: Large ribosomal subunit protein P1w (112 aa).

The tract at residues 85–112 (AAAPAAEEKKKDEPAEESDGDLGFGLFD) is disordered. S102 bears the Phosphoserine mark.

This sequence belongs to the eukaryotic ribosomal protein P1/P2 family. P1 and P2 exist as dimers at the large ribosomal subunit.

Plays an important role in the elongation step of protein synthesis. This Arabidopsis thaliana (Mouse-ear cress) protein is Large ribosomal subunit protein P1w (RPP1A).